Consider the following 502-residue polypeptide: ATP synthase subunit alpha (502 aa).

ATP is bound at residue 169 to 176; it reads GDRQTGKT.

Belongs to the ATPase alpha/beta chains family. F-type ATPases have 2 components, CF(1) - the catalytic core - and CF(0) - the membrane proton channel. CF(1) has five subunits: alpha(3), beta(3), gamma(1), delta(1), epsilon(1). CF(0) has three main subunits: a(1), b(2) and c(9-12). The alpha and beta chains form an alternating ring which encloses part of the gamma chain. CF(1) is attached to CF(0) by a central stalk formed by the gamma and epsilon chains, while a peripheral stalk is formed by the delta and b chains.

Its subcellular location is the cell inner membrane. The catalysed reaction is ATP + H2O + 4 H(+)(in) = ADP + phosphate + 5 H(+)(out). Functionally, produces ATP from ADP in the presence of a proton gradient across the membrane. The alpha chain is a regulatory subunit. In Nitratidesulfovibrio vulgaris (strain DSM 19637 / Miyazaki F) (Desulfovibrio vulgaris), this protein is ATP synthase subunit alpha.